Here is a 273-residue protein sequence, read N- to C-terminus: Protein BRANCHLESS TRICHOME (273 aa).

Positions 1-12 (MKDMKMQSSPET) are enriched in polar residues. The disordered stretch occupies residues 1 to 30 (MKDMKMQSSPETMMTRIPTPDPHSTGVRED). The stretch at 69–199 (IKVFMESELG…GERERNRMMK (131 aa)) forms a coiled coil.

As to quaternary structure, interacts with STI.

Its function is as follows. Acts as a key regulator of trichome branching. Could participate with STI in the same pathway. Also plays a role in integrating endoreplication levels with cell shape. The chain is Protein BRANCHLESS TRICHOME (BLT) from Arabidopsis thaliana (Mouse-ear cress).